We begin with the raw amino-acid sequence, 280 residues long: Pyridoxal 5'-phosphate synthase subunit PdxS (280 aa).

D-ribose 5-phosphate is bound at residue Asp12. The active-site Schiff-base intermediate with D-ribose 5-phosphate is Lys69. Gly141 contributes to the D-ribose 5-phosphate binding site. Position 153 (Arg153) interacts with D-glyceraldehyde 3-phosphate. D-ribose 5-phosphate is bound by residues Gly202 and 223-224 (GS).

This sequence belongs to the PdxS/SNZ family. In terms of assembly, in the presence of PdxT, forms a dodecamer of heterodimers.

The catalysed reaction is aldehydo-D-ribose 5-phosphate + D-glyceraldehyde 3-phosphate + L-glutamine = pyridoxal 5'-phosphate + L-glutamate + phosphate + 3 H2O + H(+). Its pathway is cofactor biosynthesis; pyridoxal 5'-phosphate biosynthesis. Its function is as follows. Catalyzes the formation of pyridoxal 5'-phosphate from ribose 5-phosphate (RBP), glyceraldehyde 3-phosphate (G3P) and ammonia. The ammonia is provided by the PdxT subunit. Can also use ribulose 5-phosphate and dihydroxyacetone phosphate as substrates, resulting from enzyme-catalyzed isomerization of RBP and G3P, respectively. This is Pyridoxal 5'-phosphate synthase subunit PdxS from Fusobacterium nucleatum subsp. nucleatum (strain ATCC 25586 / DSM 15643 / BCRC 10681 / CIP 101130 / JCM 8532 / KCTC 2640 / LMG 13131 / VPI 4355).